The primary structure comprises 242 residues: 1-(5-phosphoribosyl)-5-[(5-phosphoribosylamino)methylideneamino] imidazole-4-carboxamide isomerase (242 aa).

D10 functions as the Proton acceptor in the catalytic mechanism. The active-site Proton donor is D131.

Belongs to the HisA/HisF family.

Its subcellular location is the cytoplasm. The catalysed reaction is 1-(5-phospho-beta-D-ribosyl)-5-[(5-phospho-beta-D-ribosylamino)methylideneamino]imidazole-4-carboxamide = 5-[(5-phospho-1-deoxy-D-ribulos-1-ylimino)methylamino]-1-(5-phospho-beta-D-ribosyl)imidazole-4-carboxamide. It participates in amino-acid biosynthesis; L-histidine biosynthesis; L-histidine from 5-phospho-alpha-D-ribose 1-diphosphate: step 4/9. In Granulibacter bethesdensis (strain ATCC BAA-1260 / CGDNIH1), this protein is 1-(5-phosphoribosyl)-5-[(5-phosphoribosylamino)methylideneamino] imidazole-4-carboxamide isomerase.